A 739-amino-acid chain; its full sequence is Phosphoribosylformylglycinamidine synthase subunit PurL (739 aa).

Histidine 53 is a catalytic residue. 2 residues coordinate ATP: tyrosine 56 and lysine 95. Residue glutamate 97 coordinates Mg(2+). Substrate contacts are provided by residues serine 98–histidine 101 and arginine 120. Catalysis depends on histidine 99, which acts as the Proton acceptor. Aspartate 121 serves as a coordination point for Mg(2+). Glutamine 244 lines the substrate pocket. Aspartate 274 is a binding site for Mg(2+). A substrate-binding site is contributed by glutamate 318 to glutamine 320. ATP-binding residues include aspartate 501 and glycine 538. A Mg(2+)-binding site is contributed by asparagine 539. Residue serine 541 coordinates substrate.

Belongs to the FGAMS family. As to quaternary structure, monomer. Part of the FGAM synthase complex composed of 1 PurL, 1 PurQ and 2 PurS subunits.

It is found in the cytoplasm. It carries out the reaction N(2)-formyl-N(1)-(5-phospho-beta-D-ribosyl)glycinamide + L-glutamine + ATP + H2O = 2-formamido-N(1)-(5-O-phospho-beta-D-ribosyl)acetamidine + L-glutamate + ADP + phosphate + H(+). Its pathway is purine metabolism; IMP biosynthesis via de novo pathway; 5-amino-1-(5-phospho-D-ribosyl)imidazole from N(2)-formyl-N(1)-(5-phospho-D-ribosyl)glycinamide: step 1/2. Part of the phosphoribosylformylglycinamidine synthase complex involved in the purines biosynthetic pathway. Catalyzes the ATP-dependent conversion of formylglycinamide ribonucleotide (FGAR) and glutamine to yield formylglycinamidine ribonucleotide (FGAM) and glutamate. The FGAM synthase complex is composed of three subunits. PurQ produces an ammonia molecule by converting glutamine to glutamate. PurL transfers the ammonia molecule to FGAR to form FGAM in an ATP-dependent manner. PurS interacts with PurQ and PurL and is thought to assist in the transfer of the ammonia molecule from PurQ to PurL. The sequence is that of Phosphoribosylformylglycinamidine synthase subunit PurL from Listeria monocytogenes serotype 4a (strain HCC23).